The chain runs to 754 residues: Glutathione biosynthesis bifunctional protein GshAB (754 aa).

The glutamate--cysteine ligase stretch occupies residues Met1 to Ala332. The region spanning Lys488–Phe746 is the ATP-grasp domain. ATP is bound at residue Pro515 to Arg573. Mg(2+)-binding residues include Asp695, Glu716, and Asn718. Mn(2+) contacts are provided by Asp695, Glu716, and Asn718.

It in the N-terminal section; belongs to the glutamate--cysteine ligase type 1 family. Type 2 subfamily. Monomer. Requires Mg(2+) as cofactor. Mn(2+) is required as a cofactor.

The enzyme catalyses L-cysteine + L-glutamate + ATP = gamma-L-glutamyl-L-cysteine + ADP + phosphate + H(+). It catalyses the reaction gamma-L-glutamyl-L-cysteine + glycine + ATP = glutathione + ADP + phosphate + H(+). The protein operates within sulfur metabolism; glutathione biosynthesis; glutathione from L-cysteine and L-glutamate: step 1/2. It participates in sulfur metabolism; glutathione biosynthesis; glutathione from L-cysteine and L-glutamate: step 2/2. Synthesizes glutathione from L-glutamate and L-cysteine via gamma-L-glutamyl-L-cysteine. This chain is Glutathione biosynthesis bifunctional protein GshAB, found in Streptococcus thermophilus (strain ATCC BAA-250 / LMG 18311).